The sequence spans 637 residues: MSQNKACDLCRLKKIKCSRGQPRCQTCTLFQADCHYSNRARRKRLVQRSKETFGGITLPVFDYAAGINGNEPEPSDHSIPNQENFALTTNGTISKNIEKPEDGEESVQRRLKLLEEKIDLLLDIATETSEFKRENKAIELPSLVTQIKDAESIVIKHRQGSPVDNTPTRILNVESLFPPQLPDWEKAFHDIPKKEVAHELVTSYFQHVNWWWPTFVYNDFMYEFERLYAFGFHSNNAWLISFYSILALSSIRKRLGNSKTLAESLFSTAWVFVQKSDFFLTPSIDKVQALIVMTQYAAYLSSSSLCRTLCGQACLMAQQLNLHRKQSTDVEPEKAESWKRIFWMCYILDKNISLIFGTPSVFNDKDIDCNLPDSKYELLFGVQSGGDLIFVPTVSLTIIQSEIRNRLYSVKSPTQMAAREKIIIPIHQKLKAWEENLPSEIKMYHEMLLNNTFSPTISLSDRFEFLTFAGMEVYFSYLNTLIILHRPSSSTENRRICINAAREAVQLLKNRLNIDLRVNVKADPLWIFLYCPFTPFLIIFNNLVHETDTETDSETLLNDLDLLHVIYDFFMEMEPVSDVALELVKIADKLLRVAKEVCSAKNNDVTDSTFKDIVEGFELNDLNSWDFDRVTNVMRNL.

The zn(2)-C6 fungal-type DNA-binding region spans 7–34 (CDLCRLKKIKCSRGQPRCQTCTLFQADC). The segment at 304–327 (SLCRTLCGQACLMAQQLNLHRKQS) adopts a C2H2-type; degenerate zinc-finger fold.

It localises to the nucleus. This is an uncharacterized protein from Schizosaccharomyces pombe (strain 972 / ATCC 24843) (Fission yeast).